Here is a 156-residue protein sequence, read N- to C-terminus: 6,7-dimethyl-8-ribityllumazine synthase (156 aa).

Residues phenylalanine 23, alanine 57–glutamate 59, and alanine 81–isoleucine 83 contribute to the 5-amino-6-(D-ribitylamino)uracil site. Residue alanine 86–threonine 87 participates in (2S)-2-hydroxy-3-oxobutyl phosphate binding. The active-site Proton donor is histidine 89. Position 114 (phenylalanine 114) interacts with 5-amino-6-(D-ribitylamino)uracil. Arginine 128 is a (2S)-2-hydroxy-3-oxobutyl phosphate binding site.

The protein belongs to the DMRL synthase family.

The enzyme catalyses (2S)-2-hydroxy-3-oxobutyl phosphate + 5-amino-6-(D-ribitylamino)uracil = 6,7-dimethyl-8-(1-D-ribityl)lumazine + phosphate + 2 H2O + H(+). It participates in cofactor biosynthesis; riboflavin biosynthesis; riboflavin from 2-hydroxy-3-oxobutyl phosphate and 5-amino-6-(D-ribitylamino)uracil: step 1/2. Catalyzes the formation of 6,7-dimethyl-8-ribityllumazine by condensation of 5-amino-6-(D-ribitylamino)uracil with 3,4-dihydroxy-2-butanone 4-phosphate. This is the penultimate step in the biosynthesis of riboflavin. This Campylobacter concisus (strain 13826) protein is 6,7-dimethyl-8-ribityllumazine synthase.